Consider the following 465-residue polypeptide: MSFLVAIVGRANVGKSTLFNVLTNSRDALVFDFEGVTRDRQYGQAKYDDLGYLVVDTGGISDQDAGFDEFMAKQSQMAIDEANLVFFVVDGRSGLTSGDEYVANLLRQKDKRVVVVVNKVDGVEEESAMAEFYELGFDKVFAVSAAHRRNTQKLLDKFLKKPLNEFYRDYTQTQEHKEQQRHGIHFSLIGRPNVGKSTLTNRMLGEDRVVVFDMPGTTIDSVSIPFERHGHKYTIVDTAGVRRRGKVKQTLEKFSVIKTLQAIQDSNVVVAVVDAREGISDQDLSLIHFAIKNGRALVLAINKWDGMTEEDRNLVKQDLKRKLFFLEDYVDVHFISALHGTNVGHVFESIDTAYACANKKITTADATRLMQLAVEAHSPPMVGKFRIKLKYAHVGGHNPPVIVIHGNQVNRLPNSYKRYLENFFREALDFRGTPIVFEFKQSENPFADRKNKRIKDEGSKSKKTK.

2 consecutive EngA-type G domains span residues 3-166 (FLVA…LNEF) and 184-358 (IHFS…ACAN). GTP is bound by residues 9–16 (GRANVGKS), 56–60 (DTGGI), 118–121 (NKVD), 190–197 (GRPNVGKS), 237–241 (DTAGV), and 302–305 (NKWD). The KH-like domain maps to 359 to 443 (KKITTADATR…PIVFEFKQSE (85 aa)).

The protein belongs to the TRAFAC class TrmE-Era-EngA-EngB-Septin-like GTPase superfamily. EngA (Der) GTPase family. In terms of assembly, associates with the 50S ribosomal subunit.

Functionally, GTPase that plays an essential role in the late steps of ribosome biogenesis. The polypeptide is GTPase Der (Francisella philomiragia subsp. philomiragia (strain ATCC 25017 / CCUG 19701 / FSC 153 / O#319-036)).